We begin with the raw amino-acid sequence, 474 residues long: Vitamin D-binding protein (474 aa).

Positions M1–A16 are cleaved as a signal peptide. Albumin domains are found at residues L17–H208, L209–K394, and E395–L474. Cystine bridges form between C29/C75, C74/C83, C96/C112, C111/C122, C145/C190, C189/C198, C220/C266, C265/C273, C286/C300, C299/C311, C335/C376, C375/C384, C407/C453, and C452/C462.

The protein belongs to the ALB/AFP/VDB family. As to quaternary structure, associates with membrane-bound immunoglobulin on the surface of B-lymphocytes and with IgG Fc receptor on the membranes of T-lymphocytes. Interacts with LRP2; the interaction is required for renal uptake of GC in complex with 25-hydroxyvitamin D3. Allele GC*1S is O-glycosylated at Thr-436. The trisaccharide sugar moiety can be modified by the successive removal of neuraminic acid and galactose leaving an O-mceeN-acetyl-galactosamine. This conversion is thought to produce a macrophage-activating factor (Gc-MAF). Only a minor proportion of plasma GC is O-glycosylated. The potential N-glycosylation site predicted at Asn-288 is thought to be nonglycosylated. Expressed in the liver. Found in plasma, ascites, cerebrospinal fluid and urine.

The protein resides in the secreted. Involved in vitamin D transport and storage, scavenging of extracellular G-actin, enhancement of the chemotactic activity of C5 alpha for neutrophils in inflammation and macrophage activation. This chain is Vitamin D-binding protein (GC), found in Homo sapiens (Human).